The following is a 370-amino-acid chain: Ig heavy chain C region (370 aa).

3 Ig-like domains span residues 40–134 (PTVI…RNIT), 145–237 (PAIK…DSIH), and 247–347 (PSVS…RTVN). N-linked (GlcNAc...) asparagine glycosylation is found at asparagine 98, asparagine 132, asparagine 177, asparagine 343, asparagine 347, and asparagine 357.

The chain is Ig heavy chain C region from Heterodontus francisci (Horn shark).